Consider the following 247-residue polypeptide: Ribonuclease PH (247 aa).

Residues Arg-96 and 134-136 (GTR) contribute to the phosphate site.

This sequence belongs to the RNase PH family. In terms of assembly, homohexameric ring arranged as a trimer of dimers.

The catalysed reaction is tRNA(n+1) + phosphate = tRNA(n) + a ribonucleoside 5'-diphosphate. In terms of biological role, phosphorolytic 3'-5' exoribonuclease that plays an important role in tRNA 3'-end maturation. Removes nucleotide residues following the 3'-CCA terminus of tRNAs; can also add nucleotides to the ends of RNA molecules by using nucleoside diphosphates as substrates, but this may not be physiologically important. Probably plays a role in initiation of 16S rRNA degradation (leading to ribosome degradation) during starvation. This is Ribonuclease PH from Tropheryma whipplei (strain TW08/27) (Whipple's bacillus).